Here is a 555-residue protein sequence, read N- to C-terminus: MYNGKDRAQNSYQPMYQRPMQVQGQQQAQSFVGKKNTIGSVHGKAPMLMANNDVFTIGPYRARKDRMRVSVLEKYEVIGYIAAGTYGKVYKAKRQINSGTNSANGSSLNGTNAKIPQFDSTQPKSSSSMDMQANTNALRRNLLKDEGVTPGRIRTTREDVSPHYNSQKQTLIKKPLTVFYAIKKFKTEKDGVEQLHYTGISQSACREMALCRELHNKHLTTLVEIFLERKCVHMVYEYAEHDLLQIIHFHSHPEKRMIPPRMVRSIMWQLLDGVSYLHQNWVLHRDLKPANIMVTIDGCVKIGDLGLARKFHNMLQTLYTGDKVVVTIWYRAPELLLGARHYTPAVDLWSVGCIFAELIGLQPIFKGEEAKLDSKKTVPFQVNQLQRILEVLGTPDQKIWPYLEKYPEYDQITKFPKYRDNLATWYHSAGGRDKHALSLLYHLLNYDPIKRIDAFNALEHKYFTESDIPVSENVFEGLTYKYPARRIHTNDNDIMNLGSRTKNNTQASGITAGAAANALGGLGVNRRILAAAAAAAAAVSGNNASDEPSRKKNRR.

In terms of domain architecture, Protein kinase spans 75–463; sequence YEVIGYIAAG…AFNALEHKYF (389 aa). Residue 81–89 participates in ATP binding; sequence IAAGTYGKV. A compositionally biased stretch (polar residues) spans 100–138; sequence TNSANGSSLNGTNAKIPQFDSTQPKSSSSMDMQANTNAL. A disordered region spans residues 100-166; it reads TNSANGSSLN…REDVSPHYNS (67 aa). Lys183 contributes to the ATP binding site. The active-site Proton acceptor is the Asp286.

The protein belongs to the protein kinase superfamily. CMGC Ser/Thr protein kinase family. CDC2/CDKX subfamily. In terms of assembly, component of the SRB8-11 complex which consists of SRB8, SSN2/SRB9, SSN3/SRB10 and SSN8/SRB11. The SRB8-11 complex associates with the Mediator complex. The SSN3/SRB10 and SSN8/SRB11 kinase-cyclin pair also associate with the RNA polymerase II holoenzyme. Interacts with TUP1.

It is found in the nucleus. It carries out the reaction L-seryl-[protein] + ATP = O-phospho-L-seryl-[protein] + ADP + H(+). The enzyme catalyses L-threonyl-[protein] + ATP = O-phospho-L-threonyl-[protein] + ADP + H(+). It catalyses the reaction [DNA-directed RNA polymerase] + ATP = phospho-[DNA-directed RNA polymerase] + ADP + H(+). In terms of biological role, component of the SRB8-11 complex. The SRB8-11 complex is a regulatory module of the Mediator complex which is itself involved in regulation of basal and activated RNA polymerase II-dependent transcription. The SRB8-11 complex may be involved in the transcriptional repression of a subset of genes regulated by Mediator. It may inhibit the association of the Mediator complex with RNA polymerase II to form the holoenzyme complex. The SRB8-11 complex phosphorylates the C-terminal domain (CTD) of the largest subunit of RNA polymerase II RPB1 at serines 2 and 5. The SSN3/SRB10 and SSN8/SRB11 kinase-cyclin pair may also positively and negatively regulate numerous transcriptional activators in response to changes in nutritional and physiological conditions. Phosphorylates GCN4, promoting its ubiquitin-mediated degradation, and MSN2, promoting its nuclear exclusion. Phosphorylates STE12, thereby promoting its degradation and inhibition of filamentous growth. Phosphorylates GAL4, and this phosphorylation is required for efficient galactose-inducible transcription. Also phosphorylates BDF1 and the TAF2 subunit of the TFIID complex. In Saccharomyces cerevisiae (strain ATCC 204508 / S288c) (Baker's yeast), this protein is Meiotic mRNA stability protein kinase SSN3 (SSN3).